The following is a 329-amino-acid chain: GTP 3',8-cyclase (329 aa).

In terms of domain architecture, Radical SAM core spans 8–234 (AFARKFYYLR…QLRQRSDGPA (227 aa)). Arg17 lines the GTP pocket. [4Fe-4S] cluster contacts are provided by Cys24 and Cys28. Tyr30 contributes to the S-adenosyl-L-methionine binding site. Position 31 (Cys31) interacts with [4Fe-4S] cluster. Residue Arg68 coordinates GTP. Gly72 contacts S-adenosyl-L-methionine. Residue Thr99 participates in GTP binding. Ser123 contributes to the S-adenosyl-L-methionine binding site. Lys160 is a binding site for GTP. Position 194 (Met194) interacts with S-adenosyl-L-methionine. Cys257 and Cys260 together coordinate [4Fe-4S] cluster. 262 to 264 (RLR) is a binding site for GTP. Cys274 contributes to the [4Fe-4S] cluster binding site.

Belongs to the radical SAM superfamily. MoaA family. Monomer and homodimer. It depends on [4Fe-4S] cluster as a cofactor.

It carries out the reaction GTP + AH2 + S-adenosyl-L-methionine = (8S)-3',8-cyclo-7,8-dihydroguanosine 5'-triphosphate + 5'-deoxyadenosine + L-methionine + A + H(+). Its pathway is cofactor biosynthesis; molybdopterin biosynthesis. Functionally, catalyzes the cyclization of GTP to (8S)-3',8-cyclo-7,8-dihydroguanosine 5'-triphosphate. The sequence is that of GTP 3',8-cyclase from Escherichia coli O127:H6 (strain E2348/69 / EPEC).